Here is a 201-residue protein sequence, read N- to C-terminus: ATP-dependent Clp protease proteolytic subunit (201 aa).

The active-site Nucleophile is Ser105. The active site involves His130.

Belongs to the peptidase S14 family. Fourteen ClpP subunits assemble into 2 heptameric rings which stack back to back to give a disk-like structure with a central cavity, resembling the structure of eukaryotic proteasomes.

Its subcellular location is the cytoplasm. The catalysed reaction is Hydrolysis of proteins to small peptides in the presence of ATP and magnesium. alpha-casein is the usual test substrate. In the absence of ATP, only oligopeptides shorter than five residues are hydrolyzed (such as succinyl-Leu-Tyr-|-NHMec, and Leu-Tyr-Leu-|-Tyr-Trp, in which cleavage of the -Tyr-|-Leu- and -Tyr-|-Trp bonds also occurs).. Cleaves peptides in various proteins in a process that requires ATP hydrolysis. Has a chymotrypsin-like activity. Plays a major role in the degradation of misfolded proteins. This Acinetobacter baylyi (strain ATCC 33305 / BD413 / ADP1) protein is ATP-dependent Clp protease proteolytic subunit.